Here is a 362-residue protein sequence, read N- to C-terminus: Probable dual-specificity RNA methyltransferase RlmN (362 aa).

Glu-105 acts as the Proton acceptor in catalysis. Residues 111–344 enclose the Radical SAM core domain; the sequence is HEYGNSICVT…VTIRREQGHD (234 aa). Cys-118 and Cys-349 are joined by a disulfide. Residues Cys-125, Cys-129, and Cys-132 each contribute to the [4Fe-4S] cluster site. Residues 175–176, Ser-207, 230–232, and Asn-306 each bind S-adenosyl-L-methionine; these read GE and SLH. Cys-349 serves as the catalytic S-methylcysteine intermediate.

The protein belongs to the radical SAM superfamily. RlmN family. It depends on [4Fe-4S] cluster as a cofactor.

The protein resides in the cytoplasm. The catalysed reaction is adenosine(2503) in 23S rRNA + 2 reduced [2Fe-2S]-[ferredoxin] + 2 S-adenosyl-L-methionine = 2-methyladenosine(2503) in 23S rRNA + 5'-deoxyadenosine + L-methionine + 2 oxidized [2Fe-2S]-[ferredoxin] + S-adenosyl-L-homocysteine. It carries out the reaction adenosine(37) in tRNA + 2 reduced [2Fe-2S]-[ferredoxin] + 2 S-adenosyl-L-methionine = 2-methyladenosine(37) in tRNA + 5'-deoxyadenosine + L-methionine + 2 oxidized [2Fe-2S]-[ferredoxin] + S-adenosyl-L-homocysteine. Functionally, specifically methylates position 2 of adenine 2503 in 23S rRNA and position 2 of adenine 37 in tRNAs. The protein is Probable dual-specificity RNA methyltransferase RlmN of Bacillus cytotoxicus (strain DSM 22905 / CIP 110041 / 391-98 / NVH 391-98).